The sequence spans 336 residues: Dihydroorotate dehydrogenase (quinone) (336 aa).

FMN is bound by residues 62 to 66 and threonine 86; that span reads AGLDK. Residue lysine 66 participates in substrate binding. Residue 111 to 115 coordinates substrate; that stretch reads NRMGF. Residues asparagine 139 and asparagine 172 each coordinate FMN. Position 172 (asparagine 172) interacts with substrate. Serine 175 functions as the Nucleophile in the catalytic mechanism. A substrate-binding site is contributed by asparagine 177. Positions 217 and 245 each coordinate FMN. Position 246–247 (246–247) interacts with substrate; it reads NT. FMN contacts are provided by residues glycine 268, glycine 297, and 318–319; that span reads YS.

It belongs to the dihydroorotate dehydrogenase family. Type 2 subfamily. Monomer. FMN serves as cofactor.

The protein localises to the cell membrane. The enzyme catalyses (S)-dihydroorotate + a quinone = orotate + a quinol. Its pathway is pyrimidine metabolism; UMP biosynthesis via de novo pathway; orotate from (S)-dihydroorotate (quinone route): step 1/1. Functionally, catalyzes the conversion of dihydroorotate to orotate with quinone as electron acceptor. The chain is Dihydroorotate dehydrogenase (quinone) from Aliivibrio fischeri (strain MJ11) (Vibrio fischeri).